A 161-amino-acid polypeptide reads, in one-letter code: 6,7-dimethyl-8-ribityllumazine synthase (161 aa).

Residues phenylalanine 23, serine 61–glutamate 63, and alanine 85–isoleucine 87 contribute to the 5-amino-6-(D-ribitylamino)uracil site. Aspartate 90 to threonine 91 contacts (2S)-2-hydroxy-3-oxobutyl phosphate. Histidine 93 (proton donor) is an active-site residue. Phenylalanine 118 provides a ligand contact to 5-amino-6-(D-ribitylamino)uracil. Residue arginine 132 participates in (2S)-2-hydroxy-3-oxobutyl phosphate binding.

This sequence belongs to the DMRL synthase family.

The enzyme catalyses (2S)-2-hydroxy-3-oxobutyl phosphate + 5-amino-6-(D-ribitylamino)uracil = 6,7-dimethyl-8-(1-D-ribityl)lumazine + phosphate + 2 H2O + H(+). It participates in cofactor biosynthesis; riboflavin biosynthesis; riboflavin from 2-hydroxy-3-oxobutyl phosphate and 5-amino-6-(D-ribitylamino)uracil: step 1/2. Functionally, catalyzes the formation of 6,7-dimethyl-8-ribityllumazine by condensation of 5-amino-6-(D-ribitylamino)uracil with 3,4-dihydroxy-2-butanone 4-phosphate. This is the penultimate step in the biosynthesis of riboflavin. The chain is 6,7-dimethyl-8-ribityllumazine synthase from Synechococcus sp. (strain WH7803).